The chain runs to 221 residues: ATP-dependent dethiobiotin synthetase BioD (221 aa).

13–18 (DIGKTY) contributes to the ATP binding site. Thr-17 provides a ligand contact to Mg(2+). Lys-38 is a catalytic residue. Position 42 (Ser-42) interacts with substrate. ATP is bound by residues Asp-51, 112 to 115 (EGSG), and 176 to 177 (NR). Positions 51 and 112 each coordinate Mg(2+).

The protein belongs to the dethiobiotin synthetase family. Homodimer. Mg(2+) serves as cofactor.

Its subcellular location is the cytoplasm. The enzyme catalyses (7R,8S)-7,8-diammoniononanoate + CO2 + ATP = (4R,5S)-dethiobiotin + ADP + phosphate + 3 H(+). It participates in cofactor biosynthesis; biotin biosynthesis; biotin from 7,8-diaminononanoate: step 1/2. Its function is as follows. Catalyzes a mechanistically unusual reaction, the ATP-dependent insertion of CO2 between the N7 and N8 nitrogen atoms of 7,8-diaminopelargonic acid (DAPA, also called 7,8-diammoniononanoate) to form a ureido ring. This is ATP-dependent dethiobiotin synthetase BioD from Brachyspira hyodysenteriae (strain ATCC 49526 / WA1).